The chain runs to 73 residues: Antimicrobial peptide TsAP-2 (73 aa).

Residues 1 to 22 (MQIKHLITIFFLVLIVADHCHA) form the signal peptide. Lys39 carries the post-translational modification Lysine amide. The propeptide occupies 45 to 73 (EITSQIEQYRNLQKREAELENLLANLPVY).

The protein belongs to the non-disulfide-bridged peptide (NDBP) superfamily. Short antimicrobial peptide (group 4) family. As to expression, expressed by the venom gland.

It is found in the secreted. Its function is as follows. Antimicrobial peptide. Has a high antibacterial activity against the Gram-positive bacterium S.aureus (MIC=5-17.30 uM), the methicillin-resistant S.aureus (MRSA) (MIC=17.30 uM), and E.faecalis (MIC=69.23 uM). Has antifungal activity against Candida spp. and one Cryptococcus neoformans strains with MICs values ranging from 6.25 to 100 uM. Also shows an inhibitory activity on C.albicans biofilms at high concentrations. Has a moderate hemolytic potency (18% at 20 uM). Also inhibits the growth of the five human cancer cell lines tested (the squamous carcinoma cell line H157 (IC(50)=4.1 uM), the lung adenocarcinoma cell line H838 (11.0 uM), the breast carcinoma cell line MCF-7 (6.4 uM), the androgen-independent prostate adenocarcinoma cell line PC3 (13.3 uM) and the glioblastoma cell line U251-MG (15.4 uM)). In the model of polymicrobial sepsis, it exhibits an antibiotic effect, reducing the levels of microorganisms in the infectious focus and the inflammatory responses in the lung and cecum of septic animals. The sequence is that of Antimicrobial peptide TsAP-2 from Tityus serrulatus (Brazilian scorpion).